The primary structure comprises 777 residues: Probable aconitate hydratase, mitochondrial (777 aa).

Residues 1-26 (MNSLLRLSHLAGPAHYRALHSSSSIW) constitute a mitochondrion transit peptide. Substrate contacts are provided by residues glutamine 96 and 189–191 (DSH). Residues cysteine 382, cysteine 445, and cysteine 448 each coordinate [4Fe-4S] cluster. Arginine 471 and arginine 476 together coordinate substrate. The segment at 534–555 (YDPGEDTFQAPSGSGQVDVSPS) is disordered. Polar residues predominate over residues 542-555 (QAPSGSGQVDVSPS). Substrate-binding positions include arginine 601 and 664–665 (SR).

Belongs to the aconitase/IPM isomerase family. Monomer. Requires [4Fe-4S] cluster as cofactor.

Its subcellular location is the mitochondrion. The enzyme catalyses citrate = D-threo-isocitrate. It functions in the pathway carbohydrate metabolism; tricarboxylic acid cycle; isocitrate from oxaloacetate: step 2/2. Functionally, catalyzes the isomerization of citrate to isocitrate via cis-aconitate. This Caenorhabditis elegans protein is Probable aconitate hydratase, mitochondrial.